The following is a 176-amino-acid chain: Ribosome rescue factor SmrB (176 aa).

One can recognise a Smr domain in the interval 93–168 (LDLHGYRQSE…GDAALLVLID (76 aa)).

It belongs to the SmrB family. In terms of assembly, associates with collided ribosomes, but not with correctly translating polysomes.

Acts as a ribosome collision sensor. Detects stalled/collided disomes (pairs of ribosomes where the leading ribosome is stalled and a second ribosome has collided with it) and endonucleolytically cleaves mRNA at the 5' boundary of the stalled ribosome. Stalled/collided disomes form a new interface (primarily via the 30S subunits) that binds SmrB. Cleaved mRNA becomes available for tmRNA ligation, leading to ribosomal subunit dissociation and rescue of stalled ribosomes. The polypeptide is Ribosome rescue factor SmrB (Shewanella sp. (strain MR-4)).